The sequence spans 960 residues: Isoleucine--tRNA ligase (960 aa).

Positions 82–92 (PYANGHIHIGH) match the 'HIGH' region motif. Position 606 (Glu606) interacts with L-isoleucyl-5'-AMP. The short motif at 647 to 651 (KMSKS) is the 'KMSKS' region element. Lys650 provides a ligand contact to ATP. 4 residues coordinate Zn(2+): Cys931, Cys934, Cys951, and Cys954.

It belongs to the class-I aminoacyl-tRNA synthetase family. IleS type 1 subfamily. In terms of assembly, monomer. Zn(2+) is required as a cofactor.

It localises to the cytoplasm. The enzyme catalyses tRNA(Ile) + L-isoleucine + ATP = L-isoleucyl-tRNA(Ile) + AMP + diphosphate. Its function is as follows. Catalyzes the attachment of isoleucine to tRNA(Ile). As IleRS can inadvertently accommodate and process structurally similar amino acids such as valine, to avoid such errors it has two additional distinct tRNA(Ile)-dependent editing activities. One activity is designated as 'pretransfer' editing and involves the hydrolysis of activated Val-AMP. The other activity is designated 'posttransfer' editing and involves deacylation of mischarged Val-tRNA(Ile). The chain is Isoleucine--tRNA ligase from Gluconobacter oxydans (strain 621H) (Gluconobacter suboxydans).